Here is a 316-residue protein sequence, read N- to C-terminus: BTB/POZ domain-containing adapter for CUL3-mediated RhoA degradation protein 2 (316 aa).

The region spanning Lys-28–Gln-96 is the BTB domain. Over residues Glu-268–Pro-279 the composition is skewed to polar residues. The interval Glu-268–Glu-287 is disordered. Ser-278 is subject to Phosphoserine. At Ser-280 the chain carries Phosphoserine; by CK2.

Belongs to the BACURD family. As to quaternary structure, component of the BCR(TNFAIP1) E3 ubiquitin ligase complex, at least composed of CUL3, TNFAIP1/BACURD2 and RBX1. Interacts with RHOA; with a preference for RhoA-GDP. Interacts with RHOB. Interacts with CSNK2B. Interacts with PCNA. In terms of processing, phosphorylation at Ser-280 by CK2 facilitates the nucleus localization and increases interaction with PCNA.

Its subcellular location is the cytoplasm. The protein resides in the nucleus. It localises to the endosome. The protein operates within protein modification; protein ubiquitination. Its function is as follows. Substrate-specific adapter of a BCR (BTB-CUL3-RBX1) E3 ubiquitin-protein ligase complex involved in regulation of cytoskeleton structure. The BCR(TNFAIP1) E3 ubiquitin ligase complex mediates the ubiquitination of RHOA, leading to its degradation by the proteasome, thereby regulating the actin cytoskeleton and cell migration. Its interaction with RHOB may regulate apoptosis. May enhance the PCNA-dependent DNA polymerase delta activity. In Rattus norvegicus (Rat), this protein is BTB/POZ domain-containing adapter for CUL3-mediated RhoA degradation protein 2 (Tnfaip1).